Reading from the N-terminus, the 158-residue chain is Ribosome-binding factor A (158 aa).

The disordered stretch occupies residues 114 to 158; the sequence is AKDAEVRQVSTGAQYAGDADPYRKPEDEDEETDGSSEKNEGPASA. Residues 148-158 show a composition bias toward basic and acidic residues; that stretch reads SSEKNEGPASA.

This sequence belongs to the RbfA family. In terms of assembly, monomer. Binds 30S ribosomal subunits, but not 50S ribosomal subunits or 70S ribosomes.

The protein localises to the cytoplasm. Functionally, one of several proteins that assist in the late maturation steps of the functional core of the 30S ribosomal subunit. Associates with free 30S ribosomal subunits (but not with 30S subunits that are part of 70S ribosomes or polysomes). Required for efficient processing of 16S rRNA. May interact with the 5'-terminal helix region of 16S rRNA. The sequence is that of Ribosome-binding factor A from Streptomyces griseus subsp. griseus (strain JCM 4626 / CBS 651.72 / NBRC 13350 / KCC S-0626 / ISP 5235).